The following is a 616-amino-acid chain: Chaperone protein HscA (616 aa).

It belongs to the heat shock protein 70 family.

In terms of biological role, chaperone involved in the maturation of iron-sulfur cluster-containing proteins. Has a low intrinsic ATPase activity which is markedly stimulated by HscB. Involved in the maturation of IscU. In Escherichia coli O7:K1 (strain IAI39 / ExPEC), this protein is Chaperone protein HscA.